The primary structure comprises 139 residues: Hydrogenase maturation factor HypA (139 aa).

Residue His-2 participates in Ni(2+) binding. The Zn(2+) site is built by Cys-73, Cys-76, Cys-110, and Cys-113.

The protein belongs to the HypA/HybF family.

Its function is as follows. Involved in the maturation of [NiFe] hydrogenases. Required for nickel insertion into the metal center of the hydrogenase. This chain is Hydrogenase maturation factor HypA, found in Pyrococcus abyssi (strain GE5 / Orsay).